A 633-amino-acid chain; its full sequence is Chaperone protein HtpG (633 aa).

An a; substrate-binding region spans residues 1–341; that stretch reads MSATSSKETL…SADLPLNVSR (341 aa). The interval 342–558 is b; sequence EILQSSRDID…EGDMSANLER (217 aa). The segment at 559-633 is c; sequence LLKAAGQAAP…LNGLLAMLPG (75 aa).

The protein belongs to the heat shock protein 90 family. As to quaternary structure, homodimer.

It localises to the cytoplasm. In terms of biological role, molecular chaperone. Has ATPase activity. This Thiobacillus denitrificans (strain ATCC 25259 / T1) protein is Chaperone protein HtpG.